Consider the following 602-residue polypeptide: GTP-binding protein 2 (602 aa).

Residues 18–64 (GPAMGGNLKARGAGGSSSCGGPKGKKKNGRNRGGKANNPPYLPPEAE) are disordered. Gly residues predominate over residues 29–39 (GAGGSSSCGGP). Residues 40 to 50 (KGKKKNGRNRG) are compositionally biased toward basic residues. The tr-type G domain occupies 170-398 (FLDLRVAVLG…LNILPPLTNS (229 aa)). Residues 179–186 (GNVDSGKS), 260–264 (DLAGH), and 316–319 (SKVD) each bind GTP.

This sequence belongs to the TRAFAC class translation factor GTPase superfamily. Classic translation factor GTPase family. GTPBP1 subfamily. Predominantly expressed in thymus, spleen, and testis. Expressed at lower levels in brain, heart, lung, kidney, and skeletal muscle. In testis, specifically expressed in spermatocytes and round spermatids.

In Mus musculus (Mouse), this protein is GTP-binding protein 2.